A 334-amino-acid polypeptide reads, in one-letter code: D-fructose 1,6-bisphosphatase class 2/sedoheptulose 1,7-bisphosphatase (334 aa).

Positions 33, 57, 85, and 88 each coordinate Mn(2+). Substrate contacts are provided by residues 88-90, Tyr-119, 164-166, and 186-188; these read EGT, RAR, and DGD. Glu-213 is a binding site for Mn(2+).

The protein belongs to the FBPase class 2 family. Homotetramer. It depends on Mn(2+) as a cofactor.

The catalysed reaction is beta-D-fructose 1,6-bisphosphate + H2O = beta-D-fructose 6-phosphate + phosphate. The enzyme catalyses D-sedoheptulose 1,7-bisphosphate + H2O = D-sedoheptulose 7-phosphate + phosphate. Its pathway is carbohydrate biosynthesis; Calvin cycle. Functionally, catalyzes the hydrolysis of fructose 1,6-bisphosphate (Fru 1,6-P2) and sedoheptulose 1,7-bisphosphate (Sed 1,7-P2) to fructose 6-phosphate and sedoheptulose 7-phosphate, respectively. This Synechococcus sp. (strain CC9605) protein is D-fructose 1,6-bisphosphatase class 2/sedoheptulose 1,7-bisphosphatase.